The chain runs to 256 residues: Ubiquinone/menaquinone biosynthesis C-methyltransferase UbiE (256 aa).

S-adenosyl-L-methionine is bound by residues threonine 78 and aspartate 99.

This sequence belongs to the class I-like SAM-binding methyltransferase superfamily. MenG/UbiE family.

The catalysed reaction is a 2-demethylmenaquinol + S-adenosyl-L-methionine = a menaquinol + S-adenosyl-L-homocysteine + H(+). It carries out the reaction a 2-methoxy-6-(all-trans-polyprenyl)benzene-1,4-diol + S-adenosyl-L-methionine = a 5-methoxy-2-methyl-3-(all-trans-polyprenyl)benzene-1,4-diol + S-adenosyl-L-homocysteine + H(+). The protein operates within quinol/quinone metabolism; menaquinone biosynthesis; menaquinol from 1,4-dihydroxy-2-naphthoate: step 2/2. It participates in cofactor biosynthesis; ubiquinone biosynthesis. Functionally, methyltransferase required for the conversion of demethylmenaquinol (DMKH2) to menaquinol (MKH2) and the conversion of 2-polyprenyl-6-methoxy-1,4-benzoquinol (DDMQH2) to 2-polyprenyl-3-methyl-6-methoxy-1,4-benzoquinol (DMQH2). The protein is Ubiquinone/menaquinone biosynthesis C-methyltransferase UbiE of Geobacter sulfurreducens (strain ATCC 51573 / DSM 12127 / PCA).